The following is a 158-amino-acid chain: Transcription elongation factor GreA (158 aa).

The stretch at 14–76 (LDQLKDELTH…EIESILKNVK (63 aa)) forms a coiled coil.

Belongs to the GreA/GreB family.

Necessary for efficient RNA polymerase transcription elongation past template-encoded arresting sites. The arresting sites in DNA have the property of trapping a certain fraction of elongating RNA polymerases that pass through, resulting in locked ternary complexes. Cleavage of the nascent transcript by cleavage factors such as GreA or GreB allows the resumption of elongation from the new 3'terminus. GreA releases sequences of 2 to 3 nucleotides. The chain is Transcription elongation factor GreA from Acholeplasma laidlawii (strain PG-8A).